We begin with the raw amino-acid sequence, 227 residues long: Transmembrane emp24 domain-containing protein 1 (227 aa).

An N-terminal signal peptide occupies residues 1–23 (MMAAGTALGLALWLLLPPVGVGG). Topologically, residues 24 to 194 (AGPPPIQDGE…LQEGNLERVN (171 aa)) are extracellular. Residues 43–125 (KQCFYQSAPA…EKLVFFELIF (83 aa)) form the GOLD domain. Residues 145 to 170 (EILEVKMEDIKESIETMRIRLERSIQ) are a coiled coil. Residues 195-215 (FWSAVNVAVLLLVAVLQVCTL) form a helical membrane-spanning segment. Residues 216-227 (KRFFQDKRPVPM) lie on the Cytoplasmic side of the membrane. The COPII vesicle coat-binding signature appears at 218–219 (FF). The COPI vesicle coat-binding signature appears at 218–227 (FFQDKRPVPM).

Belongs to the EMP24/GP25L family. Homodimer in endoplasmic reticulum, endoplasmic reticulum-Golgi intermediate compartment and cis-Golgi network. Interacts with IL1RL1. Interacts with RNF26; this interaction is important to modulate innate immune signaling through the cGAS-STING pathway.

It is found in the cell membrane. The protein resides in the endoplasmic reticulum membrane. The protein localises to the golgi apparatus. It localises to the cis-Golgi network membrane. Its subcellular location is the endoplasmic reticulum-Golgi intermediate compartment membrane. Potential role in vesicular protein trafficking, mainly in the early secretory pathway. May act as a cargo receptor at the lumenal side for incorporation of secretory cargo molecules into transport vesicles and may be involved in vesicle coat formation at the cytoplasmic side. Plays a positive role in IL-33-mediated IL-8 and IL-6 production by interacting with interleukin-33 receptor IL1RL1. Plays also a role in the modulation of innate immune signaling through the cGAS-STING pathway by interacting with RNF26. The chain is Transmembrane emp24 domain-containing protein 1 (TMED1) from Bos taurus (Bovine).